The chain runs to 284 residues: Pantothenate synthetase (284 aa).

30–37 (MGNLHEGH) provides a ligand contact to ATP. Catalysis depends on H37, which acts as the Proton donor. Position 61 (Q61) interacts with (R)-pantoate. Q61 is a binding site for beta-alanine. 149–152 (GEKD) contributes to the ATP binding site. Q155 lines the (R)-pantoate pocket. Residues V178 and 186–189 (LSSR) contribute to the ATP site.

Belongs to the pantothenate synthetase family. As to quaternary structure, homodimer.

It is found in the cytoplasm. It catalyses the reaction (R)-pantoate + beta-alanine + ATP = (R)-pantothenate + AMP + diphosphate + H(+). The protein operates within cofactor biosynthesis; (R)-pantothenate biosynthesis; (R)-pantothenate from (R)-pantoate and beta-alanine: step 1/1. In terms of biological role, catalyzes the condensation of pantoate with beta-alanine in an ATP-dependent reaction via a pantoyl-adenylate intermediate. The polypeptide is Pantothenate synthetase (Yersinia enterocolitica serotype O:8 / biotype 1B (strain NCTC 13174 / 8081)).